We begin with the raw amino-acid sequence, 855 residues long: DNA mismatch repair protein MutS (855 aa).

Glycine 621–serine 628 contributes to the ATP binding site.

The protein belongs to the DNA mismatch repair MutS family.

Functionally, this protein is involved in the repair of mismatches in DNA. It is possible that it carries out the mismatch recognition step. This protein has a weak ATPase activity. The sequence is that of DNA mismatch repair protein MutS from Francisella tularensis subsp. holarctica (strain OSU18).